A 334-amino-acid chain; its full sequence is Galactosylgalactosylxylosylprotein 3-beta-glucuronosyltransferase 1 (334 aa).

At 1–6 (MPKRRD) the chain is on the cytoplasmic side. The segment at 3–5 (KRR) is essential for transport from endoplasmic reticulum to Golgi apparatus and interaction with SAR1A. Residues 7 to 27 (ILAIVLIVLPWTLLITVWHQS) form a helical; Signal-anchor for type II membrane protein membrane-spanning segment. Over 28–334 (SLAPLLAVHK…KGFTDPSVEI (307 aa)) the chain is Lumenal. 91 to 93 (PTY) contacts UDP-alpha-D-glucuronate. A phosphothreonine mark is found at threonine 103 and threonine 108. Aspartate 122 contributes to the UDP-alpha-D-glucuronate binding site. N-linked (GlcNAc...) asparagine glycosylation is present at asparagine 140. 2 residues coordinate UDP-alpha-D-glucuronate: arginine 165 and arginine 170. A glycan (N-linked (GlcNAc...) asparagine) is linked at asparagine 184. 195–197 (DDD) lines the UDP-alpha-D-glucuronate pocket. Aspartate 197 provides a ligand contact to Mn(2+). Residues 245 to 254 (FDPHRPFAID) form an interaction with galactose moiety of substrate glycoprotein region. The Proton donor/acceptor role is filled by glutamate 284. An N-linked (GlcNAc...) asparagine glycan is attached at asparagine 303. Residue 311 to 313 (HTR) participates in UDP-alpha-D-glucuronate binding.

Belongs to the glycosyltransferase 43 family. In terms of assembly, homodimer. Interacts with SAR1A. The cofactor is Mn(2+). In terms of processing, the soluble form derives from the membrane form by proteolytic processing.

It is found in the golgi apparatus membrane. The protein localises to the secreted. Its subcellular location is the endoplasmic reticulum membrane. It catalyses the reaction 3-O-(beta-D-galactosyl-(1-&gt;3)-beta-D-galactosyl-(1-&gt;4)-beta-D-xylosyl)-L-seryl-[protein] + UDP-alpha-D-glucuronate = 3-O-(beta-D-GlcA-(1-&gt;3)-beta-D-Gal-(1-&gt;3)-beta-D-Gal-(1-&gt;4)-beta-D-Xyl)-L-seryl-[protein] + UDP + H(+). It functions in the pathway protein modification; protein glycosylation. Involved in the biosynthesis of L2/HNK-1 carbohydrate epitope on glycoproteins. Can also play a role in glycosaminoglycan biosynthesis. Substrates include asialo-orosomucoid (ASOR), asialo-fetuin, and asialo-neural cell adhesion molecule. Requires sphingomyelin for activity: stearoyl-sphingomyelin was the most effective, followed by palmitoyl-sphingomyelin and lignoceroyl-sphingomyelin. Activity was demonstrated only for sphingomyelin with a saturated fatty acid and not for that with an unsaturated fatty acid, regardless of the length of the acyl group. In Mus musculus (Mouse), this protein is Galactosylgalactosylxylosylprotein 3-beta-glucuronosyltransferase 1.